The chain runs to 658 residues: Endoglucanase 3 (658 aa).

Positions 1 to 23 are cleaved as a signal peptide; sequence MQLKNFYPKMSVLGIATVMALTA. A lipid anchor (N-palmitoyl cysteine) is attached at C24. Residue C24 is the site of S-diacylglycerol cysteine attachment. Residues 24–265 constitute a propeptide that is removed on maturation; the sequence is CGDENTQALF…TDSLFIDNIY (242 aa). Positions 42–83 are disordered; the sequence is ENQVPVSSSDMSPTSSDAVIDPTSSSAAVVDPSTLPAEGPIT. The span at 45–58 shows a compositional bias: low complexity; sequence VPVSSSDMSPTSSD. A CBM11 domain is found at 87–277; the sequence is GLGTLVDDFE…DSSEVEKDQP (191 aa). The active-site Proton donor is E448. The Nucleophile role is filled by E597.

It belongs to the glycosyl hydrolase 5 (cellulase A) family. As to quaternary structure, monomer. In terms of processing, may be a lipoprotein and may be glycosylated.

It is found in the membrane. The catalysed reaction is Endohydrolysis of (1-&gt;4)-beta-D-glucosidic linkages in cellulose, lichenin and cereal beta-D-glucans.. In terms of biological role, exhibits both endoglucanase and cellobiosidase activities. The protein is Endoglucanase 3 (cel-3) of Fibrobacter succinogenes (strain ATCC 19169 / S85).